The primary structure comprises 510 residues: ATP-dependent zinc metalloprotease FtsH 2 (510 aa).

Over 1–4 (MKKN) the chain is Cytoplasmic. Residues 5-25 (LHIIILALSIFINLLFIYIFI) form a helical membrane-spanning segment. Residues 26-31 (SEVKPN) are Extracellular-facing. The chain crosses the membrane as a helical span at residues 32-52 (LNLNLSFILTAAVIVVTYLLF). The Cytoplasmic segment spans residues 53–510 (KNKFSELMPV…LWEEENTLCV (458 aa)). An ATP-binding site is contributed by 124 to 131 (GPPGTGKT). H343 is a binding site for Zn(2+). E344 is a catalytic residue. H347 and D418 together coordinate Zn(2+).

It in the central section; belongs to the AAA ATPase family. This sequence in the C-terminal section; belongs to the peptidase M41 family. In terms of assembly, homohexamer. It depends on Zn(2+) as a cofactor.

Its subcellular location is the cell membrane. In terms of biological role, acts as a processive, ATP-dependent zinc metallopeptidase for both cytoplasmic and membrane proteins. Plays a role in the quality control of integral membrane proteins. The polypeptide is ATP-dependent zinc metalloprotease FtsH 2 (Thermoanaerobacter sp. (strain X514)).